A 650-amino-acid polypeptide reads, in one-letter code: MGIVVPTMKASVIEVLLVLLVTGIHSNKETPKKTKRPKLTVPQINCDVKAGKIINPEFMVKCPAGCQDPKYHVYGTGVYASYSSVCGAAIHSGVLDNSGGKILVRKVAGQSGYKGSYSNGVQSLSLPRWRESFIVAESKPQKGVAYPSTLTYSSSKTAAAKAGETTKAYEKPSIPGTTIQPVTLTQAQATPVAEVTHRSTSKPFAASVTNSPRPQPVGHRSQEMEEVDGWKPGPVLLDSGFVPKEELSTQSSEPVPQGDPNCKIDLSFLIDGSTSIGKRRFRIQKQFLADVVQALDIGPAGPLVGVVQYGDNPATQFNLKTHMNSQDLKTAIEKITQRGGLSNVGRAISFVTKTFFSKANGNRGGAPNVAVVMVDGWPTDKVEEVSRVARESGINVFFITVEGAAERDIQHVVEPGFASKAVCRTNGFYSFNVQSWLSLHKTVQPLVKRVCDTDRLACSKTCLNSADIGFVIDGSSSMGTSNFRTVLQFVANLSKEFEISDTDTRVGAVQYTYEQRLEFGFDKYNSKADILSAIRRVGYWSGGTSTGAAIQYALEQLFKKSKPNKRKVMIIITDGRSYDDVRIPAMAAYQKGVITYAIGIAWAAQDELEVMATHPAKDHSFFVDDFDNLYKIAPRIIQNICTEFNSQPRN.

Residues 1–26 (MGIVVPTMKASVIEVLLVLLVTGIHS) form the signal peptide. The LCCL domain occupies 40 to 133 (TVPQINCDVK…LSLPRWRESF (94 aa)). 2 disulfide bridges follow: cysteine 46/cysteine 62 and cysteine 66/cysteine 86. Positions 198–226 (RSTSKPFAASVTNSPRPQPVGHRSQEMEE) are disordered. VWFA domains are found at residues 265 to 450 (DLSF…VKRV) and 467 to 640 (DIGF…IQNI). Asparagine 492 is a glycosylation site (N-linked (GlcNAc...) asparagine).

As to quaternary structure, binds dermatan sulfate and chondroitin sulfate.

Its subcellular location is the secreted. It is found in the extracellular space. The protein resides in the extracellular matrix. Functionally, promotes matrix assembly and cell adhesiveness. Plays a role in spinal cord formation by regulating the proliferation and differentiation of neural stem cells. In Mus musculus (Mouse), this protein is Vitrin (Vit).